The primary structure comprises 525 residues: Asparagine synthetase [glutamine-hydrolyzing] (525 aa).

Residue Cys2 is the For GATase activity of the active site. The region spanning Cys2–Gly185 is the Glutamine amidotransferase type-2 domain. Residues Arg50–Ile54, Asn75–Glu77, and Asp98 contribute to the L-glutamine site. In terms of domain architecture, Asparagine synthetase spans Pro193 to Cys517. Residues Leu231, Val267, and Ser341–Gly342 contribute to the ATP site.

The enzyme catalyses L-aspartate + L-glutamine + ATP + H2O = L-asparagine + L-glutamate + AMP + diphosphate + H(+). It participates in amino-acid biosynthesis; L-asparagine biosynthesis; L-asparagine from L-aspartate (L-Gln route): step 1/1. Its function is as follows. Could play a role in remobilization of nitrogen in flowers during senescence. This is Asparagine synthetase [glutamine-hydrolyzing] (AND1) from Sandersonia aurantiaca (Christmas-bells).